We begin with the raw amino-acid sequence, 362 residues long: MHVVLAGGGTAGHIEPALALADALRRQDPTVGITALGTERGLETRLVPERGYELALIPAVPLPRKPTPELITVPGRLRGTIKAAEQILERTKADCVVGFGGYVALPGYLAAKRLGVPIVIHEANARPGLANKIGSRYAARVARLHAGQQRARRPLHRHPVRRSIATLDRAAVRPEARARFGLDPNLPTLLVSGGSQGARRLNEVVQQVAPWLQQAGIQILHAVGPKNELPQVQQMPGMPPYIPVSYLDRMDLAYAAADMMLCRAGAMTVAELSAVGLPAAYVPLPIGNGEQRLNAQPVVKAGGGLLVDDAELTPEWVQQTVLPVLADPHRLYEMSRAAGEFGRRDADELLVGMVYEAIASRR.

Residues 10-12, N124, R161, S195, and Q291 contribute to the UDP-N-acetyl-alpha-D-glucosamine site; that span reads TAG.

The protein belongs to the glycosyltransferase 28 family. MurG subfamily.

The protein resides in the cell membrane. The catalysed reaction is di-trans,octa-cis-undecaprenyl diphospho-N-acetyl-alpha-D-muramoyl-L-alanyl-D-glutamyl-meso-2,6-diaminopimeloyl-D-alanyl-D-alanine + UDP-N-acetyl-alpha-D-glucosamine = di-trans,octa-cis-undecaprenyl diphospho-[N-acetyl-alpha-D-glucosaminyl-(1-&gt;4)]-N-acetyl-alpha-D-muramoyl-L-alanyl-D-glutamyl-meso-2,6-diaminopimeloyl-D-alanyl-D-alanine + UDP + H(+). Its pathway is cell wall biogenesis; peptidoglycan biosynthesis. In terms of biological role, cell wall formation. Catalyzes the transfer of a GlcNAc subunit on undecaprenyl-pyrophosphoryl-MurNAc-pentapeptide (lipid intermediate I) to form undecaprenyl-pyrophosphoryl-MurNAc-(pentapeptide)GlcNAc (lipid intermediate II). The sequence is that of UDP-N-acetylglucosamine--N-acetylmuramyl-(pentapeptide) pyrophosphoryl-undecaprenol N-acetylglucosamine transferase from Streptomyces collinus.